The primary structure comprises 288 residues: MATFFGEVQSVFSRAVDEEEEDEDDDEEEEEDREIIAELERKREVRVTWNPELTAAIESSPGKRLPCSSVILSVGDNATGFVSSYILSSGSWEVAGSVTLWNERCRDCNVRKDFLPAPSSCTFYRSITDPTVLLCQCNCHVAEDQLFQWCEKVFGSLEKSSLKVTVLSTCPVSEYKTPESTYSLPVPFLKALRTSEYREEVPCPLLEQPNIVDGLPAAVLSHCQVLGIPAVFYQCYTDISKLDSVTIKAFRPLLSSGSLSRLAADSANIQETLRKTVKLNEIQSNLYI.

The disordered stretch occupies residues 1-33 (MATFFGEVQSVFSRAVDEEEEDEDDDEEEEEDR). The segment covering 17 to 33 (DEEEEDEDDDEEEEEDR) has biased composition (acidic residues).

This sequence belongs to the PSMG1 family. As to quaternary structure, forms a heterodimer with psmg2. In terms of processing, degraded by the proteasome upon completion of 20S proteasome maturation.

It localises to the cytoplasm. It is found in the endoplasmic reticulum. In terms of biological role, chaperone protein which promotes assembly of the 20S proteasome as part of a heterodimer with psmg2. The sequence is that of Proteasome assembly chaperone 1 from Xenopus laevis (African clawed frog).